The sequence spans 282 residues: PILR alpha-associated neural protein (282 aa).

Residues 1–31 (MESRMWPALLLSHLLPLWPLLLLPLPPPAQG) form the signal peptide. Positions 28–99 (PAQGSSSSPR…PSGFEEGPPS (72 aa)) are disordered. Topologically, residues 32–178 (SSSSPRTPPA…FGGRGEGVDP (147 aa)) are extracellular. The segment covering 46-56 (PCARGGPSAPR) has biased composition (low complexity). O-linked (GalNAc...) threonine glycosylation is present at T140. A helical transmembrane segment spans residues 179–199 (QLYVTITISIIIVLVATGIIF). At 200-282 (KFCWDRSQKR…QLNRIPLVNL (83 aa)) the chain is on the cytoplasmic side. Residues 209–282 (RRRPSGQQGA…QLNRIPLVNL (74 aa)) form a disordered region. The span at 213-229 (SGQQGALRQEESQQPLT) shows a compositional bias: polar residues.

In terms of processing, O-glycosylation at Thr-140 is essential for recognition by PILRA. As to expression, mainly expressed in adult brain and cerebellum. Weaker expression in fetal brain and virtually no expression in spleen, heart, kidney, liver and dorsal ganglion relative to brain.

Its subcellular location is the membrane. Functionally, acts as a ligand for PILRA in neural tissues, where it may be involved in immune regulation. In Homo sapiens (Human), this protein is PILR alpha-associated neural protein (PIANP).